Reading from the N-terminus, the 720-residue chain is Nucleolar protein 11 (720 aa).

The interval 365 to 392 is disordered; sequence KDPETKPSNAGAQKKTRERKTNANAGNG.

Its subcellular location is the nucleus. It localises to the nucleolus. Its function is as follows. Ribosome biogenesis factor. May be required for both optimal rDNA transcription and pre-rRNA processing. This chain is Nucleolar protein 11 (nol11), found in Xenopus laevis (African clawed frog).